The chain runs to 410 residues: Homeobox protein Hox-A3a (410 aa).

The tract at residues 79–126 (VTDTSDNKQPPTAPSGPSSPSSLNQIPNIDSAAKNPVHVSPTPSTRKH) is disordered. Positions 127–132 (IFPWMK) match the Antp-type hexapeptide motif. A DNA-binding region (homeobox) is located at residues 163-222 (SKRARTAYTSAQLVELEKEFHFNRYLCRPRRVEMANLLNLTERQIKIWFQNRRMKYKKDQ). The segment at 222–249 (QKGLGMMPSPGAQSPHSPVSLSSGGGGG) is disordered.

Belongs to the Antp homeobox family.

It localises to the nucleus. Functionally, sequence-specific transcription factor which is part of a developmental regulatory system that provides cells with specific positional identities on the anterior-posterior axis. The protein is Homeobox protein Hox-A3a (hoxa3a) of Danio rerio (Zebrafish).